The following is a 957-amino-acid chain: ADAMTS-like protein 2 (957 aa).

The signal sequence occupies residues 1 to 29; the sequence is MDGRRQHPHWAWSLLAVAVVAGGAAPTEA. Residues 47–106 enclose the TSP type-1 1 domain; sequence AYWWGEWTKWTACSRSCGGGVTSQERHCLQQRRKSVPGTGNRTCVGTSKRYQLCRVQECP. 3 disulfide bridges follow: cysteine 59–cysteine 100, cysteine 63–cysteine 105, and cysteine 74–cysteine 90. 8 N-linked (GlcNAc...) asparagine glycosylation sites follow: asparagine 87, asparagine 374, asparagine 435, asparagine 482, asparagine 518, asparagine 530, asparagine 539, and asparagine 550. Positions 532–544 are enriched in polar residues; it reads SSEAPFPNTSASP. A disordered region spans residues 532-568; that stretch reads SSEAPFPNTSASPPNLAGNRTHKARTRPKARKQGVSP. Residues 551–563 are compositionally biased toward basic residues; that stretch reads RTHKARTRPKARK. 6 consecutive TSP type-1 domains span residues 570–624, 628–692, 694–742, 743–801, 803–857, and 859–914; these read DMYR…EFCA, CQPR…PACG, QWEM…TGPP, CDRQ…KNCP, HWLA…TCFE, and PCFK…QPCP. Asparagine 737 carries an N-linked (GlcNAc...) asparagine glycan. Residue asparagine 813 is glycosylated (N-linked (GlcNAc...) asparagine). The PLAC domain maps to 918–956; it reads PDDSCQDQPGTNCALAIKVNLCGHWYYSKACCRSCRPPH.

Interacts with LTBP1. Glycosylated. Can be O-fucosylated by POFUT2 on a serine or a threonine residue found within the consensus sequence C1-X(2)-(S/T)-C2-G of the TSP type-1 repeat domains where C1 and C2 are the first and second cysteine residue of the repeat, respectively. Fucosylated repeats can then be further glycosylated by the addition of a beta-1,3-glucose residue by the glucosyltransferase, B3GALTL. Fucosylation mediates the efficient secretion of ADAMTS family members. Can also be C-glycosylated with one or two mannose molecules on tryptophan residues within the consensus sequence W-X-X-W of the TPRs, and N-glycosylated. These other glycosylations can also facilitate secretion.

Its subcellular location is the secreted. This chain is ADAMTS-like protein 2 (Adamtsl2), found in Mus musculus (Mouse).